The following is a 172-amino-acid chain: Ribosome maturation factor RimM (172 aa).

Residues 96 to 169 (EGYFYHFQLQ…RMEIKLLPGL (74 aa)) enclose the PRC barrel domain.

Belongs to the RimM family. Binds ribosomal protein uS19.

The protein resides in the cytoplasm. Its function is as follows. An accessory protein needed during the final step in the assembly of 30S ribosomal subunit, possibly for assembly of the head region. Essential for efficient processing of 16S rRNA. May be needed both before and after RbfA during the maturation of 16S rRNA. It has affinity for free ribosomal 30S subunits but not for 70S ribosomes. This is Ribosome maturation factor RimM from Syntrophomonas wolfei subsp. wolfei (strain DSM 2245B / Goettingen).